We begin with the raw amino-acid sequence, 193 residues long: Threonylcarbamoyl-AMP synthase (193 aa).

Residues 14–193 (SRLQQRARKQ…IDLESGRVLR (180 aa)) form the YrdC-like domain.

The protein belongs to the SUA5 family. TsaC subfamily.

The protein resides in the cytoplasm. It catalyses the reaction L-threonine + hydrogencarbonate + ATP = L-threonylcarbamoyladenylate + diphosphate + H2O. In terms of biological role, required for the formation of a threonylcarbamoyl group on adenosine at position 37 (t(6)A37) in tRNAs that read codons beginning with adenine. Catalyzes the conversion of L-threonine, HCO(3)(-)/CO(2) and ATP to give threonylcarbamoyl-AMP (TC-AMP) as the acyladenylate intermediate, with the release of diphosphate. This is Threonylcarbamoyl-AMP synthase from Chromobacterium violaceum (strain ATCC 12472 / DSM 30191 / JCM 1249 / CCUG 213 / NBRC 12614 / NCIMB 9131 / NCTC 9757 / MK).